We begin with the raw amino-acid sequence, 291 residues long: Glucose and ribitol dehydrogenase (291 aa).

The tract at residues Met-1–Pro-35 is disordered. Leu-45 to Ala-69 provides a ligand contact to NAD(+). Ser-183 provides a ligand contact to substrate. Tyr-196 serves as the catalytic Proton acceptor.

The protein belongs to the short-chain dehydrogenases/reductases (SDR) family. Expressed in embryogenic cells, somatic embryos and seeds in the later stages of development, but not in non-embryogenic cells and mature leaves.

Its function is as follows. May act as a short alcohol-polyol-sugar dehydrogenase possibly related to carbohydrate metabolism and the acquisition of desiccation tolerance. May also be involved in signal transduction. The polypeptide is Glucose and ribitol dehydrogenase (CAISE5) (Daucus carota (Wild carrot)).